The sequence spans 568 residues: Proline--tRNA ligase (568 aa).

Belongs to the class-II aminoacyl-tRNA synthetase family. ProS type 1 subfamily. In terms of assembly, homodimer.

It is found in the cytoplasm. It catalyses the reaction tRNA(Pro) + L-proline + ATP = L-prolyl-tRNA(Pro) + AMP + diphosphate. Its function is as follows. Catalyzes the attachment of proline to tRNA(Pro) in a two-step reaction: proline is first activated by ATP to form Pro-AMP and then transferred to the acceptor end of tRNA(Pro). As ProRS can inadvertently accommodate and process non-cognate amino acids such as alanine and cysteine, to avoid such errors it has two additional distinct editing activities against alanine. One activity is designated as 'pretransfer' editing and involves the tRNA(Pro)-independent hydrolysis of activated Ala-AMP. The other activity is designated 'posttransfer' editing and involves deacylation of mischarged Ala-tRNA(Pro). The misacylated Cys-tRNA(Pro) is not edited by ProRS. The protein is Proline--tRNA ligase of Chromobacterium violaceum (strain ATCC 12472 / DSM 30191 / JCM 1249 / CCUG 213 / NBRC 12614 / NCIMB 9131 / NCTC 9757 / MK).